Here is a 49-residue protein sequence, read N- to C-terminus: Large ribosomal subunit protein bL33 (49 aa).

This sequence belongs to the bacterial ribosomal protein bL33 family.

The sequence is that of Large ribosomal subunit protein bL33 from Thermosipho melanesiensis (strain DSM 12029 / CIP 104789 / BI429).